Here is a 439-residue protein sequence, read N- to C-terminus: Ribosomal protein uS12 methylthiotransferase RimO (439 aa).

Positions 3 to 118 (KKFYITTLGC…AGKILREKFP (116 aa)) constitute an MTTase N-terminal domain. [4Fe-4S] cluster is bound by residues C12, C48, C81, C157, C161, and C164. Residues 143 to 370 (NYSKPYAYVK…RDVHLAILEE (228 aa)) enclose the Radical SAM core domain. Residues 373 to 438 (ESRIGQTYDA…EYDMNGTWIS (66 aa)) enclose the TRAM domain.

Belongs to the methylthiotransferase family. RimO subfamily. The cofactor is [4Fe-4S] cluster.

The protein resides in the cytoplasm. It catalyses the reaction L-aspartate(89)-[ribosomal protein uS12]-hydrogen + (sulfur carrier)-SH + AH2 + 2 S-adenosyl-L-methionine = 3-methylsulfanyl-L-aspartate(89)-[ribosomal protein uS12]-hydrogen + (sulfur carrier)-H + 5'-deoxyadenosine + L-methionine + A + S-adenosyl-L-homocysteine + 2 H(+). Catalyzes the methylthiolation of an aspartic acid residue of ribosomal protein uS12. This Leptospira borgpetersenii serovar Hardjo-bovis (strain JB197) protein is Ribosomal protein uS12 methylthiotransferase RimO.